The following is a 132-amino-acid chain: Translation initiation factor 5A (132 aa).

A Hypusine modification is found at Lys36.

The protein belongs to the eIF-5A family.

Its subcellular location is the cytoplasm. In terms of biological role, functions by promoting the formation of the first peptide bond. This Methanosphaera stadtmanae (strain ATCC 43021 / DSM 3091 / JCM 11832 / MCB-3) protein is Translation initiation factor 5A.